Here is a 99-residue protein sequence, read N- to C-terminus: A-type ATP synthase subunit F (99 aa).

It belongs to the V-ATPase F subunit family. In terms of assembly, has multiple subunits with at least A(3), B(3), C, D, E, F, H, I and proteolipid K(x).

It localises to the cell membrane. Component of the A-type ATP synthase that produces ATP from ADP in the presence of a proton gradient across the membrane. The sequence is that of A-type ATP synthase subunit F from Methanococcus aeolicus (strain ATCC BAA-1280 / DSM 17508 / OCM 812 / Nankai-3).